The primary structure comprises 360 residues: UDP-N-acetylglucosamine--N-acetylmuramyl-(pentapeptide) pyrophosphoryl-undecaprenol N-acetylglucosamine transferase (360 aa).

UDP-N-acetyl-alpha-D-glucosamine is bound by residues Ser198 and Gln289.

Belongs to the glycosyltransferase 28 family. MurG subfamily.

The protein resides in the cell membrane. The catalysed reaction is Mur2Ac(oyl-L-Ala-gamma-D-Glu-L-Lys-D-Ala-D-Ala)-di-trans,octa-cis-undecaprenyl diphosphate + UDP-N-acetyl-alpha-D-glucosamine = beta-D-GlcNAc-(1-&gt;4)-Mur2Ac(oyl-L-Ala-gamma-D-Glu-L-Lys-D-Ala-D-Ala)-di-trans,octa-cis-undecaprenyl diphosphate + UDP + H(+). It participates in cell wall biogenesis; peptidoglycan biosynthesis. Its function is as follows. Cell wall formation. Catalyzes the transfer of a GlcNAc subunit on undecaprenyl-pyrophosphoryl-MurNAc-pentapeptide (lipid intermediate I) to form undecaprenyl-pyrophosphoryl-MurNAc-(pentapeptide)GlcNAc (lipid intermediate II). The chain is UDP-N-acetylglucosamine--N-acetylmuramyl-(pentapeptide) pyrophosphoryl-undecaprenol N-acetylglucosamine transferase from Streptococcus pyogenes serotype M49 (strain NZ131).